Here is a 508-residue protein sequence, read N- to C-terminus: DNA-directed RNA polymerase subunit Rpo1C (508 aa).

Residues 1-123 (MASLLWRDTS…EIKEKYGENL (123 aa)) are unknown. A DNA-directed RNA polymerase subunit Rpo1C region spans residues 124–508 (SEDVQKVLDD…IYKGYPKTKK (385 aa)).

This sequence belongs to the RNA polymerase beta' chain family. In terms of assembly, part of the RNA polymerase complex.

It is found in the cytoplasm. The catalysed reaction is RNA(n) + a ribonucleoside 5'-triphosphate = RNA(n+1) + diphosphate. Functionally, DNA-dependent RNA polymerase (RNAP) catalyzes the transcription of DNA into RNA using the four ribonucleoside triphosphates as substrates. Forms part of the jaw domain. The sequence is that of DNA-directed RNA polymerase subunit Rpo1C from Thermoplasma acidophilum (strain ATCC 25905 / DSM 1728 / JCM 9062 / NBRC 15155 / AMRC-C165).